Reading from the N-terminus, the 217-residue chain is Pyridoxine/pyridoxamine 5'-phosphate oxidase (217 aa).

Residues 66–71, 81–82, Arg-87, Lys-88, and Gln-110 contribute to the FMN site; these read RMVLLK and FT. Lys-71 lines the substrate pocket. The substrate site is built by Tyr-128, Arg-132, and Ser-136. Residues 145–146 and Trp-190 each bind FMN; that span reads QS. Residue 196–198 participates in substrate binding; the sequence is RLH. Arg-200 serves as a coordination point for FMN.

The protein belongs to the pyridoxamine 5'-phosphate oxidase family. In terms of assembly, homodimer. FMN serves as cofactor.

It carries out the reaction pyridoxamine 5'-phosphate + O2 + H2O = pyridoxal 5'-phosphate + H2O2 + NH4(+). The catalysed reaction is pyridoxine 5'-phosphate + O2 = pyridoxal 5'-phosphate + H2O2. It functions in the pathway cofactor metabolism; pyridoxal 5'-phosphate salvage; pyridoxal 5'-phosphate from pyridoxamine 5'-phosphate: step 1/1. The protein operates within cofactor metabolism; pyridoxal 5'-phosphate salvage; pyridoxal 5'-phosphate from pyridoxine 5'-phosphate: step 1/1. Its function is as follows. Catalyzes the oxidation of either pyridoxine 5'-phosphate (PNP) or pyridoxamine 5'-phosphate (PMP) into pyridoxal 5'-phosphate (PLP). This Psychromonas ingrahamii (strain DSM 17664 / CCUG 51855 / 37) protein is Pyridoxine/pyridoxamine 5'-phosphate oxidase.